We begin with the raw amino-acid sequence, 840 residues long: Probable alpha-glucuronidase A (840 aa).

Positions 1–19 (MWSGIPIFALLSSIGIAAA) are cleaved as a signal peptide. 13 N-linked (GlcNAc...) asparagine glycosylation sites follow: Asn-50, Asn-149, Asn-222, Asn-262, Asn-279, Asn-310, Asn-465, Asn-527, Asn-576, Asn-610, Asn-682, Asn-723, and Asn-732.

This sequence belongs to the glycosyl hydrolase 67 family.

It is found in the secreted. The catalysed reaction is an alpha-D-glucuronoside + H2O = D-glucuronate + an alcohol. Its function is as follows. Alpha-glucuronidase involved in the hydrolysis of xylan, a major structural heterogeneous polysaccharide found in plant biomass representing the second most abundant polysaccharide in the biosphere, after cellulose. Releases 4-O-methylglucuronic acid from xylan. In Aspergillus fumigatus (strain CBS 144.89 / FGSC A1163 / CEA10) (Neosartorya fumigata), this protein is Probable alpha-glucuronidase A (aguA).